The sequence spans 632 residues: Glycerophosphodiester phosphodiesterase domain-containing protein 4 (632 aa).

The Cytoplasmic portion of the chain corresponds to 1-64 (MEETQDSSSS…GSCCCSRKEQ (64 aa)). The helical transmembrane segment at 65 to 85 (FFYMCLVIAFILSVLFLFVWV) threads the bilayer. The Extracellular portion of the chain corresponds to 86-114 (ETSNEYNGFDWVVYLGTGCWFFWSILVLS). A helical transmembrane segment spans residues 115 to 135 (AAGIMVAYTTLLLLLGFLLLW). At 136 to 147 (ERIELNLHTSHK) the chain is on the cytoplasmic side. A helical membrane pass occupies residues 148 to 168 (VFICLVIVLCSFLLAVLSHFW). At 169-180 (KDKWLIAGLSLQ) the chain is on the extracellular side. The chain crosses the membrane as a helical span at residues 181–201 (IFAPFVHLSLITVMIIISWPL). The Cytoplasmic segment spans residues 202 to 240 (SICVARLESEVKVRRYRMADYEQEIQERCNVFQRLRALQ). The helical transmembrane segment at 241–261 (IAAGLSFLIILLCLYLMPLGI) threads the bilayer. The Extracellular portion of the chain corresponds to 262-542 (YSPCILKKEN…SRPLFFMTPG (281 aa)). In terms of domain architecture, GP-PDE spans 276–533 (PTLFGHRGAP…DNIELLNQLS (258 aa)). A divalent metal cation is bound by residues Glu308, Asp310, and His323. N-linked (GlcNAc...) asparagine glycans are attached at residues Asn343, Asn349, Asn384, and Asn473. Residues 543-563 (FYMFMWLFLDIASAVIIGFVF) form a helical membrane-spanning segment. Over 564-632 (CYNWIKEIKR…QKTEPKTENL (69 aa)) the chain is Cytoplasmic. Residues 596 to 632 (ENNDASQQKPEVAPTSANLAPENMIELQKTEPKTENL) form a disordered region. A compositionally biased stretch (basic and acidic residues) spans 623 to 632 (QKTEPKTENL).

This sequence belongs to the glycerophosphoryl diester phosphodiesterase family. In terms of tissue distribution, detected in testis, in particular in spermatocytes.

It is found in the cytoplasm. It localises to the membrane. The sequence is that of Glycerophosphodiester phosphodiesterase domain-containing protein 4 (Gdpd4) from Mus musculus (Mouse).